The chain runs to 239 residues: Lectin (239 aa).

2 N-linked (GlcNAc...) asparagine glycosylation sites follow: Asn17 and Asn113.

This sequence belongs to the leguminous lectin family. Homodimer.

In terms of biological role, galactose and N-acetyllactosamine specific lectin. The protein is Lectin of Erythrina crista-galli (Cockspur coral tree).